We begin with the raw amino-acid sequence, 395 residues long: MGIKHLYQLIEEHTPEAVKKGEIKNQFGRKVAIDASMSIYSFLIAVRSDGQQLMSETGETTSHLMGLFYRTMRMVDNGIKPLYVFDGAPPKLKSGELAKRFQRKTEAHAAAEEAKETGTAEDVEKFSRRTVRVTREHNEECQRLLKLMGIPYIVAPTEAEAQCAALARGGKVYAAASEDMDTLTFDTPILLRHLTFSEQRKEPILEIHLDKVLEGLQMERKQFIDLCILLGCDYLDPIKGIGPSTALKLIREHNDLEGVVEHIKSQSSKKLTIPDDWPFADARLLFLEPDVRPADDPECDFKWEAPDVEGLVKFLVEEKHFNEDRVRNGAAKLQKNMKTAQQSRLEGFFKPIEKTAEQKATLKRKADEKLEEKKKKQKVDAKAKKQAKAKPRTAG.

The tract at residues 1–104 (MGIKHLYQLI…GELAKRFQRK (104 aa)) is N-domain. Mg(2+) is bound at residue aspartate 34. DNA-binding residues include arginine 47 and arginine 70. Mg(2+)-binding residues include aspartate 86, glutamate 158, glutamate 160, aspartate 179, and aspartate 181. Positions 122–253 (DVEKFSRRTV…STALKLIREH (132 aa)) are I-domain. A DNA-binding site is contributed by glutamate 158. DNA is bound by residues glycine 231 and aspartate 233. Aspartate 233 lines the Mg(2+) pocket. The segment at 341–349 (QQSRLEGFF) is interaction with PCNA. Residues 359–395 (KATLKRKADEKLEEKKKKQKVDAKAKKQAKAKPRTAG) form a disordered region. Basic and acidic residues predominate over residues 364–383 (RKADEKLEEKKKKQKVDAKA). Basic residues predominate over residues 384-395 (KKQAKAKPRTAG).

Belongs to the XPG/RAD2 endonuclease family. FEN1 subfamily. As to quaternary structure, interacts with PCNA. Three molecules of fen1 bind to one PCNA trimer with each molecule binding to one PCNA monomer. PCNA stimulates the nuclease activity without altering cleavage specificity. The cofactor is Mg(2+). In terms of processing, phosphorylated. Phosphorylation upon DNA damage induces relocalization to the nuclear plasma.

The protein resides in the nucleus. Its subcellular location is the nucleolus. It localises to the nucleoplasm. The protein localises to the mitochondrion. Its function is as follows. Structure-specific nuclease with 5'-flap endonuclease and 5'-3' exonuclease activities involved in DNA replication and repair. During DNA replication, cleaves the 5'-overhanging flap structure that is generated by displacement synthesis when DNA polymerase encounters the 5'-end of a downstream Okazaki fragment. It enters the flap from the 5'-end and then tracks to cleave the flap base, leaving a nick for ligation. Also involved in the long patch base excision repair (LP-BER) pathway, by cleaving within the apurinic/apyrimidinic (AP) site-terminated flap. Acts as a genome stabilization factor that prevents flaps from equilibrating into structures that lead to duplications and deletions. Also possesses 5'-3' exonuclease activity on nicked or gapped double-stranded DNA, and exhibits RNase H activity. Also involved in replication and repair of rDNA and in repairing mitochondrial DNA. This Pyrenophora tritici-repentis (strain Pt-1C-BFP) (Wheat tan spot fungus) protein is Flap endonuclease 1 (fen1).